An 89-amino-acid chain; its full sequence is uncharacterized protein (89 aa).

This is an uncharacterized protein from Borreliella burgdorferi (strain ATCC 35210 / DSM 4680 / CIP 102532 / B31) (Borrelia burgdorferi).